The sequence spans 264 residues: Small ribosomal subunit protein eS1 (264 aa).

Residues 233 to 264 (GEGGGAGKPSGDEAGAKVERADGYEPPVQESV) form a disordered region. Positions 242–255 (SGDEAGAKVERADG) are enriched in basic and acidic residues.

The protein belongs to the eukaryotic ribosomal protein eS1 family. As to quaternary structure, component of the small ribosomal subunit. Mature ribosomes consist of a small (40S) and a large (60S) subunit. The 40S subunit contains about 33 different proteins and 1 molecule of RNA (18S). The 60S subunit contains about 49 different proteins and 3 molecules of RNA (25S, 5.8S and 5S).

The protein localises to the cytoplasm. This chain is Small ribosomal subunit protein eS1, found in Eimeria tenella (Coccidian parasite).